The chain runs to 193 residues: Pre-histone-like nucleoprotein (193 aa).

Ser-2 bears the N-acetylserine; by host mark. Residues Ser-2–Gly-24 constitute a propeptide that is removed on maturation. Position 48 is an N6-acetyllysine; by host (Lys-48). The residue at position 55 (Thr-55) is a Phosphothreonine; by host. The short motif at Arg-183 to Thr-193 is the Nuclear localization signal element.

Belongs to the adenoviridae histone-like nucleoprotein family. In terms of assembly, interacts with the core-capsid bridging protein; this interaction bridges the virus core to the capsid. Interacts with host NPM1; this interaction might play a role in placing the pre-histone-like nucleoprotein on the viral DNA or regulating viral gene expression. Interacts with host HMGB1; this interaction inhibits host immune response. Post-translationally, cleaved near the N-terminus by the viral protease during virion maturation to form the mature protein.

The protein resides in the virion. It localises to the host nucleus. The protein localises to the host nucleolus. Plays a role in the inhibition of host immune response within the nucleus. Interacts with cellular nucleosomes and immobilizes the host immune danger signal HMGB1 on chromatin. In turn, prevents HMGB1 release out of the cell and thus decreases inflammation. Also plays a role in the wrapping and condensation of the viral DNA. May also promote viral genome import into the nucleus. The protein is Pre-histone-like nucleoprotein of Homo sapiens (Human).